The primary structure comprises 355 residues: UDP-N-acetylglucosamine--N-acetylmuramyl-(pentapeptide) pyrophosphoryl-undecaprenol N-acetylglucosamine transferase (355 aa).

UDP-N-acetyl-alpha-D-glucosamine contacts are provided by residues 15 to 17, N127, R163, S191, I244, 263 to 268, and Q288; these read TGG and ALTVSE.

The protein belongs to the glycosyltransferase 28 family. MurG subfamily.

The protein resides in the cell inner membrane. It catalyses the reaction di-trans,octa-cis-undecaprenyl diphospho-N-acetyl-alpha-D-muramoyl-L-alanyl-D-glutamyl-meso-2,6-diaminopimeloyl-D-alanyl-D-alanine + UDP-N-acetyl-alpha-D-glucosamine = di-trans,octa-cis-undecaprenyl diphospho-[N-acetyl-alpha-D-glucosaminyl-(1-&gt;4)]-N-acetyl-alpha-D-muramoyl-L-alanyl-D-glutamyl-meso-2,6-diaminopimeloyl-D-alanyl-D-alanine + UDP + H(+). It participates in cell wall biogenesis; peptidoglycan biosynthesis. Its function is as follows. Cell wall formation. Catalyzes the transfer of a GlcNAc subunit on undecaprenyl-pyrophosphoryl-MurNAc-pentapeptide (lipid intermediate I) to form undecaprenyl-pyrophosphoryl-MurNAc-(pentapeptide)GlcNAc (lipid intermediate II). The polypeptide is UDP-N-acetylglucosamine--N-acetylmuramyl-(pentapeptide) pyrophosphoryl-undecaprenol N-acetylglucosamine transferase (Citrobacter koseri (strain ATCC BAA-895 / CDC 4225-83 / SGSC4696)).